The sequence spans 56 residues: uncharacterized protein (56 aa).

This is an uncharacterized protein from Escherichia coli (strain K12).